The sequence spans 226 residues: Thymidylate kinase (226 aa).

20–27 (GGEGAGKS) contributes to the ATP binding site.

This sequence belongs to the thymidylate kinase family.

It catalyses the reaction dTMP + ATP = dTDP + ADP. Functionally, phosphorylation of dTMP to form dTDP in both de novo and salvage pathways of dTTP synthesis. The sequence is that of Thymidylate kinase from Bradyrhizobium sp. (strain ORS 278).